A 147-amino-acid chain; its full sequence is Hemoglobin subunit beta-1 (147 aa).

A Globin domain is found at 3 to 147; it reads HWTDFERSTI…VVFSLGKQYH (145 aa). 2 residues coordinate heme b: His-64 and His-93.

It belongs to the globin family. In terms of assembly, hb1 is a heterotetramer of two alpha-1 chains and two beta-1 chains. As to expression, red blood cells.

Functionally, involved in oxygen transport from gills to the various peripheral tissues. The chain is Hemoglobin subunit beta-1 from Liparis tunicatus (Kelp snailfish).